The sequence spans 127 residues: Putative iron-sulfur cluster insertion protein ErpA (127 aa).

The segment covering 1–14 has biased composition (polar residues); it reads MNTPFNDGSGQTDP. The disordered stretch occupies residues 1 to 20; the sequence is MNTPFNDGSGQTDPMTDIPT. Residues Cys55, Cys119, and Cys121 each contribute to the iron-sulfur cluster site.

It belongs to the HesB/IscA family. As to quaternary structure, homodimer. It depends on iron-sulfur cluster as a cofactor.

Functionally, required for insertion of 4Fe-4S clusters. In Nitrosospira multiformis (strain ATCC 25196 / NCIMB 11849 / C 71), this protein is Putative iron-sulfur cluster insertion protein ErpA.